We begin with the raw amino-acid sequence, 420 residues long: Protein disulfide isomerase Creld1 (420 aa).

Positions Met1–Leu29 are cleaved as a signal peptide. Topologically, residues Gln30–Glu362 are extracellular. Residues Cys46–Cys49 carry the CXXC motif. Intrachain disulfides connect Cys46-Cys49, Cys155-Cys169, Cys163-Cys181, and Cys183-Cys192. In terms of domain architecture, EGF-like 1 spans Leu153–Gly193. N-linked (GlcNAc...) asparagine glycosylation occurs at Asn205. FU repeat units follow at residues His208 to Thr255 and Ser268 to Pro315. The CXXC signature appears at Cys278–Cys281. 4 disulfide bridges follow: Cys278-Cys281, Cys309-Cys321, Cys314-Cys330, and Cys332-Cys343. One can recognise an EGF-like 2; calcium-binding domain in the interval Asp305–Ile342. Residues Met363 to Ala383 form a helical membrane-spanning segment. Position 384 (Lys384) is a topological domain, cytoplasmic. A helical membrane pass occupies residues Gly385–Leu405. Residues Ser406 to Arg420 lie on the Extracellular side of the membrane.

This sequence belongs to the CRELD family. As to expression, expressed in myoblast C2C12 cells (at protein level).

It localises to the membrane. It catalyses the reaction Catalyzes the rearrangement of -S-S- bonds in proteins.. Functionally, protein disulfide isomerase. Promotes the localization of acetylcholine receptors (AChRs) to the plasma membrane. This Mus musculus (Mouse) protein is Protein disulfide isomerase Creld1 (Creld1).